A 252-amino-acid chain; its full sequence is uncharacterized protein (252 aa).

Repeat copies occupy residues 68-82, 83-97, 98-112, 113-127, 128-142, 143-157, 158-172, 173-187, 188-202, and 203-217. The interval 68–246 is 13 X 15 AA tandem repeats; sequence TYNQSQNVCP…LIDTYNQSQN (179 aa). An 11; truncated repeat occupies 218-230; the sequence is TYNQSQNVCPQDL. A 12; truncated repeat occupies 231–239; sequence NVYTQDLID. The 13; truncated repeat unit spans residues 240-246; the sequence is TYNQSQN.

In terms of biological role, a protein probably derived from this gene is found in cuboidal crystalline inclusions, but is not toxic even when coexpressed with upstream ORF1. The protein runs anomalously as a 50 kDa band in gels. This is an uncharacterized protein from Bacillus thuringiensis subsp. kurstaki.